We begin with the raw amino-acid sequence, 198 residues long: UPF0301 protein Tfu_2389 (198 aa).

This sequence belongs to the UPF0301 (AlgH) family.

In Thermobifida fusca (strain YX), this protein is UPF0301 protein Tfu_2389.